The sequence spans 263 residues: tRNA pseudouridine synthase A (263 aa).

D51 (nucleophile) is an active-site residue. Y106 lines the substrate pocket.

This sequence belongs to the tRNA pseudouridine synthase TruA family.

The catalysed reaction is uridine(38/39/40) in tRNA = pseudouridine(38/39/40) in tRNA. Functionally, formation of pseudouridine at positions 38, 39 and 40 in the anticodon stem and loop of transfer RNAs. The chain is tRNA pseudouridine synthase A from Pyrococcus abyssi (strain GE5 / Orsay).